Consider the following 122-residue polypeptide: MIQTESMLEVADNSGARRVQCIKVLGGSHRRYAGIGDIIKVTVKEAIPRGRVKKGDVMTAVVVRTRKGVRRPDGSLIRFDENAAVLLNNNKAPVGTRIFGPVTRELRTEQFMKIISLAPEVL.

Belongs to the universal ribosomal protein uL14 family. As to quaternary structure, part of the 50S ribosomal subunit. Forms a cluster with proteins L3 and L19. In the 70S ribosome, L14 and L19 interact and together make contacts with the 16S rRNA in bridges B5 and B8.

Binds to 23S rRNA. Forms part of two intersubunit bridges in the 70S ribosome. The chain is Large ribosomal subunit protein uL14 from Alcanivorax borkumensis (strain ATCC 700651 / DSM 11573 / NCIMB 13689 / SK2).